The chain runs to 400 residues: PHD finger protein 24 (400 aa).

The N-myristoyl glycine moiety is linked to residue glycine 2. Basic and acidic residues predominate over residues 28–38 (LRDRPSIRRTG). The segment at 28–99 (LRDRPSIRRT…PEEFDRTSRF (72 aa)) is disordered. An Omega-N-methylarginine modification is found at arginine 36. Serine 43 bears the Phosphoserine mark. Threonine 47 is subject to Phosphothreonine. At serine 51 the chain carries Phosphoserine. Positions 78 to 97 (AWERLRDGRGVEPEEFDRTS) are enriched in basic and acidic residues. A PHD-type zinc finger spans residues 129–190 (NDEMCDVCEV…TGWSCHYCDN (62 aa)).

The protein is PHD finger protein 24 of Homo sapiens (Human).